The sequence spans 420 residues: ATP-dependent Clp protease ATP-binding subunit ClpX (420 aa).

The 54-residue stretch at 4 to 57 (KTPGNNGKQKLFCSFCGKEQDAVKRLVAGPGVYICDECISLCNEIIAEDHEHSH) folds into the ClpX-type ZB domain. The Zn(2+) site is built by Cys-16, Cys-19, Cys-38, and Cys-41. 122 to 129 (PTGSGKTL) contacts ATP.

Belongs to the ClpX chaperone family. In terms of assembly, component of the ClpX-ClpP complex. Forms a hexameric ring that, in the presence of ATP, binds to fourteen ClpP subunits assembled into a disk-like structure with a central cavity, resembling the structure of eukaryotic proteasomes.

Its function is as follows. ATP-dependent specificity component of the Clp protease. It directs the protease to specific substrates. Can perform chaperone functions in the absence of ClpP. This chain is ATP-dependent Clp protease ATP-binding subunit ClpX, found in Leptospira interrogans serogroup Icterohaemorrhagiae serovar copenhageni (strain Fiocruz L1-130).